Consider the following 47-residue polypeptide: Packaging protein P22 (47 aa).

Residues 22–42 (TGWLAFVGLIIVAIILWQQII) form a helical membrane-spanning segment.

In terms of assembly, heterodimer of P20 and P22; further multimerizes as hexamers of heterodimers. Part of the dodecameric portal complex that is composed of the packaging efficiency factor P6, the DNA packaging ATPase P9, and the internal heterododecamer P20/P22 which spans the virion inner membrane.

It is found in the virion membrane. Functionally, together with P22, forms the internal part of the portal complex embeded in the virion internal membrane and which plays critical roles in genome packaging and genome ejection. Both proteins multimerize as a single ring-shaped heterdodecamer arranged around a central channel and interact with the P6/P9 external part of the portal. The chain is Packaging protein P22 (XXII) from Enterobacteria phage PRD1 (Bacteriophage PRD1).